Consider the following 396-residue polypeptide: Putative isochorismate synthase (396 aa).

This sequence belongs to the isochorismate synthase family.

The catalysed reaction is chorismate = isochorismate. It participates in siderophore biosynthesis; amonabactin biosynthesis. In terms of biological role, involved in the synthesis of amonabactin, a phenolate siderophore containing 2,3-dihydroxybenzoic acid (2,3-DHB). The sequence is that of Putative isochorismate synthase (amoA) from Aeromonas hydrophila.